Reading from the N-terminus, the 388-residue chain is Succinate--CoA ligase [ADP-forming] subunit beta (388 aa).

The ATP-grasp domain maps to 9–244; the sequence is KQLFAEYGLP…PSQEDEREAH (236 aa). ATP contacts are provided by residues lysine 46, 53–55, glutamate 99, threonine 102, and glutamate 107; that span reads GRG. The Mg(2+) site is built by asparagine 199 and aspartate 213. Substrate is bound by residues asparagine 264 and 321-323; that span reads GIV.

Belongs to the succinate/malate CoA ligase beta subunit family. Heterotetramer of two alpha and two beta subunits. It depends on Mg(2+) as a cofactor.

The enzyme catalyses succinate + ATP + CoA = succinyl-CoA + ADP + phosphate. The catalysed reaction is GTP + succinate + CoA = succinyl-CoA + GDP + phosphate. It participates in carbohydrate metabolism; tricarboxylic acid cycle; succinate from succinyl-CoA (ligase route): step 1/1. Functionally, succinyl-CoA synthetase functions in the citric acid cycle (TCA), coupling the hydrolysis of succinyl-CoA to the synthesis of either ATP or GTP and thus represents the only step of substrate-level phosphorylation in the TCA. The beta subunit provides nucleotide specificity of the enzyme and binds the substrate succinate, while the binding sites for coenzyme A and phosphate are found in the alpha subunit. The protein is Succinate--CoA ligase [ADP-forming] subunit beta of Saccharophagus degradans (strain 2-40 / ATCC 43961 / DSM 17024).